The sequence spans 103 residues: Putative membrane protein insertion efficiency factor (103 aa).

It belongs to the UPF0161 family.

It localises to the cell inner membrane. Functionally, could be involved in insertion of integral membrane proteins into the membrane. The sequence is that of Putative membrane protein insertion efficiency factor from Chlamydia pneumoniae (Chlamydophila pneumoniae).